Reading from the N-terminus, the 301-residue chain is D-alanine--D-alanine ligase A (301 aa).

Residues 96–290 (KKILRYEGVE…YSKLLDMIIE (195 aa)) form the ATP-grasp domain. 123–178 (LDKLGFPLVVKPNSGGSSVGVKIVYNKNELISMLETVFEWDSEVVIEKYIKGDEIT) provides a ligand contact to ATP. D245, E257, and N259 together coordinate Mg(2+).

This sequence belongs to the D-alanine--D-alanine ligase family. The cofactor is Mg(2+). Mn(2+) is required as a cofactor.

The protein resides in the cytoplasm. It carries out the reaction 2 D-alanine + ATP = D-alanyl-D-alanine + ADP + phosphate + H(+). Its pathway is cell wall biogenesis; peptidoglycan biosynthesis. Cell wall formation. In Bacillus cereus (strain ATCC 14579 / DSM 31 / CCUG 7414 / JCM 2152 / NBRC 15305 / NCIMB 9373 / NCTC 2599 / NRRL B-3711), this protein is D-alanine--D-alanine ligase A.